The following is a 198-amino-acid chain: Crinkler effector protein BLC01 (198 aa).

The signal sequence occupies residues 1–15 (MMVKLICAIVDIAGA). Residues 16–55 (AFPIDIDTNELVGDFKKVIKAENSRTIACDANDLRLFLAK) are LQLFLAK domain. The DWL domain stretch occupies residues 56–113 (TDGRWLTEFEVQNGVADISVFEELDVVGAPLNMIGLSEETVSSVAITKELVKAKKTPL). The short motif at 114 to 119 (HVLVVP) is the HVLVXXP motif element.

It belongs to the Crinkler effector family.

The protein resides in the secreted. Its subcellular location is the host cell. In terms of biological role, secreted effector that elicits necrosis in host plants, a characteristic of plant innate immunity. This Bremia lactucae (Lettuce downy mildew) protein is Crinkler effector protein BLC01.